Reading from the N-terminus, the 601-residue chain is Adenine deaminase (601 aa).

This sequence belongs to the metallo-dependent hydrolases superfamily. Adenine deaminase family. Mn(2+) serves as cofactor.

It carries out the reaction adenine + H2O + H(+) = hypoxanthine + NH4(+). The sequence is that of Adenine deaminase from Ruegeria sp. (strain TM1040) (Silicibacter sp.).